A 141-amino-acid polypeptide reads, in one-letter code: Transcriptional regulator MraZ (141 aa).

SpoVT-AbrB domains follow at residues 5-47 (EYNH…PNEE) and 75-118 (AADC…SKER).

It belongs to the MraZ family. As to quaternary structure, forms oligomers.

It localises to the cytoplasm. It is found in the nucleoid. The chain is Transcriptional regulator MraZ from Lachnoclostridium phytofermentans (strain ATCC 700394 / DSM 18823 / ISDg) (Clostridium phytofermentans).